Reading from the N-terminus, the 644-residue chain is MQTVRMTTAQALVKFLNQQYVEFDGKQQKFIKGIFTIFGHGNVVGLGQALEEDAGELEVYQGRNEQGMANAAMAFAKQKHRKQIMACTSSVGPGSANMITSAATASANNIPVLLLPGDVFATRQPDPVLQQIEQTHDLSISTNDAFRAVSKYWDRINRPEQLMTAMIQAMRVLTNPADTGAVTICLPQDVQGEAWDFPSYFFQKRVHRIERRLPTKASLADAVEMIKRKKKPVMICGGGVRYAEAAEELKQFAETFHIPFGETQAGKSAIESSHPYNLGGIGVTGNIAANTIAKEADLVIGIGTRFTDFTTASKQLFQNEEVEFVNINISEFHANKLDALKVIADAKEALLTLIDELQVIDYRSSYTVEIADAKEAWETELSRLHNIRFTGQDFTPEVEGHFDGNLNEYVDALGSQLTQTAVIGQINTLLDEDAIIVGAAGSLPGDLQRMWASRKPNTYHMEYGYSCMGYEVAGALGAKIAEPSKEVYAMVGDGSYQMLHSELVTSLQENKKINVLLFDNSGFGCINNLQMGNGMGSFGTEFRYRNQETRKLDGAIMKIDFAASAAGYGVKTYHVTSLEQLREALIDAKKQTVSTLIDIKVLPKTMTNGYESWWHVGVAEVSKSQSVQAAYESKVSNLQQARSY.

Thiamine diphosphate is bound at residue E65. A thiamine pyrophosphate binding region spans residues 442-522; it reads SLPGDLQRMW…INVLLFDNSG (81 aa). 2 residues coordinate Mg(2+): D493 and N520.

Belongs to the TPP enzyme family. Mg(2+) serves as cofactor. It depends on thiamine diphosphate as a cofactor.

The catalysed reaction is 3D-3,5/4-trihydroxycyclohexane-1,2-dione + H2O = 5-deoxy-D-glucuronate + H(+). The protein operates within polyol metabolism; myo-inositol degradation into acetyl-CoA; acetyl-CoA from myo-inositol: step 3/7. Functionally, involved in the cleavage of the C1-C2 bond of 3D-(3,5/4)-trihydroxycyclohexane-1,2-dione (THcHDO) to yield 5-deoxy-glucuronate (5DG). In Bacillus cereus (strain ZK / E33L), this protein is 3D-(3,5/4)-trihydroxycyclohexane-1,2-dione hydrolase 1.